We begin with the raw amino-acid sequence, 120 residues long: Ribosome-binding factor A (120 aa).

The protein belongs to the RbfA family. Monomer. Binds 30S ribosomal subunits, but not 50S ribosomal subunits or 70S ribosomes.

The protein resides in the cytoplasm. Its function is as follows. One of several proteins that assist in the late maturation steps of the functional core of the 30S ribosomal subunit. Associates with free 30S ribosomal subunits (but not with 30S subunits that are part of 70S ribosomes or polysomes). Required for efficient processing of 16S rRNA. May interact with the 5'-terminal helix region of 16S rRNA. This Verminephrobacter eiseniae (strain EF01-2) protein is Ribosome-binding factor A.